A 435-amino-acid polypeptide reads, in one-letter code: Ribosomal protein uS12 methylthiotransferase RimO (435 aa).

Positions 2–118 (KKFHIVKLGC…IVEKIENGEY (117 aa)) constitute an MTTase N-terminal domain. Residues Cys-11, Cys-47, Cys-81, Cys-150, Cys-154, and Cys-157 each coordinate [4Fe-4S] cluster. Positions 136–364 (IPDSHYAYVK…MTVQSEISKN (229 aa)) constitute a Radical SAM core domain. Positions 367-435 (EKYIGETLEV…EYDLEGEIVE (69 aa)) constitute a TRAM domain.

The protein belongs to the methylthiotransferase family. RimO subfamily. [4Fe-4S] cluster serves as cofactor.

The protein resides in the cytoplasm. The enzyme catalyses L-aspartate(89)-[ribosomal protein uS12]-hydrogen + (sulfur carrier)-SH + AH2 + 2 S-adenosyl-L-methionine = 3-methylsulfanyl-L-aspartate(89)-[ribosomal protein uS12]-hydrogen + (sulfur carrier)-H + 5'-deoxyadenosine + L-methionine + A + S-adenosyl-L-homocysteine + 2 H(+). Catalyzes the methylthiolation of an aspartic acid residue of ribosomal protein uS12. This is Ribosomal protein uS12 methylthiotransferase RimO from Petrotoga mobilis (strain DSM 10674 / SJ95).